Consider the following 346-residue polypeptide: Protein RecA (346 aa).

67 to 74 is a binding site for ATP; it reads GPESSGKT.

This sequence belongs to the RecA family.

The protein localises to the cytoplasm. Can catalyze the hydrolysis of ATP in the presence of single-stranded DNA, the ATP-dependent uptake of single-stranded DNA by duplex DNA, and the ATP-dependent hybridization of homologous single-stranded DNAs. It interacts with LexA causing its activation and leading to its autocatalytic cleavage. This is Protein RecA from Mycobacterium marinum (strain ATCC BAA-535 / M).